The primary structure comprises 123 residues: Large ribosomal subunit protein uL24 (123 aa).

The protein belongs to the universal ribosomal protein uL24 family. In terms of assembly, part of the 50S ribosomal subunit.

One of two assembly initiator proteins, it binds directly to the 5'-end of the 23S rRNA, where it nucleates assembly of the 50S subunit. Its function is as follows. One of the proteins that surrounds the polypeptide exit tunnel on the outside of the subunit. This is Large ribosomal subunit protein uL24 from Kineococcus radiotolerans (strain ATCC BAA-149 / DSM 14245 / SRS30216).